The sequence spans 347 residues: tRNA N6-adenosine threonylcarbamoyltransferase (347 aa).

Residues histidine 113 and histidine 117 each coordinate Fe cation. Residues 136 to 140, aspartate 170, glycine 183, aspartate 187, and asparagine 282 each bind substrate; that span reads IVSGG. Aspartate 310 is a Fe cation binding site.

The protein belongs to the KAE1 / TsaD family. Fe(2+) serves as cofactor.

The protein localises to the cytoplasm. It carries out the reaction L-threonylcarbamoyladenylate + adenosine(37) in tRNA = N(6)-L-threonylcarbamoyladenosine(37) in tRNA + AMP + H(+). Its function is as follows. Required for the formation of a threonylcarbamoyl group on adenosine at position 37 (t(6)A37) in tRNAs that read codons beginning with adenine. Is involved in the transfer of the threonylcarbamoyl moiety of threonylcarbamoyl-AMP (TC-AMP) to the N6 group of A37, together with TsaE and TsaB. TsaD likely plays a direct catalytic role in this reaction. This is tRNA N6-adenosine threonylcarbamoyltransferase from Bifidobacterium adolescentis (strain ATCC 15703 / DSM 20083 / NCTC 11814 / E194a).